Consider the following 152-residue polypeptide: Large ribosomal subunit protein uL15 (152 aa).

The disordered stretch occupies residues Met1–Met57. Over residues Ser14–Arg23 the composition is skewed to basic residues. Positions Ile25–Met37 are enriched in gly residues.

This sequence belongs to the universal ribosomal protein uL15 family. Part of the 50S ribosomal subunit.

In terms of biological role, binds to the 23S rRNA. This is Large ribosomal subunit protein uL15 from Prochlorococcus marinus (strain MIT 9301).